Here is a 188-residue protein sequence, read N- to C-terminus: Ribosome maturation factor RimM (188 aa).

A PRC barrel domain is found at 96-169 (DDEFYYADLE…RILIDPMAAG (74 aa)).

The protein belongs to the RimM family. In terms of assembly, binds ribosomal protein uS19.

The protein resides in the cytoplasm. An accessory protein needed during the final step in the assembly of 30S ribosomal subunit, possibly for assembly of the head region. Essential for efficient processing of 16S rRNA. May be needed both before and after RbfA during the maturation of 16S rRNA. It has affinity for free ribosomal 30S subunits but not for 70S ribosomes. This Agrobacterium fabrum (strain C58 / ATCC 33970) (Agrobacterium tumefaciens (strain C58)) protein is Ribosome maturation factor RimM.